A 302-amino-acid chain; its full sequence is Phytoene synthase (302 aa).

Belongs to the phytoene/squalene synthase family. The cofactor is ATP. It depends on Mn(2+) as a cofactor. Requires Mg(2+) as cofactor.

Its pathway is carotenoid biosynthesis; phytoene biosynthesis. Its function is as follows. Involved in the biosynthesis of carotenoids. Catalyzes the condensation of two molecules of geranylgeranyl diphosphate (GGPP) to give prephytoene diphosphate (PPPP) and the subsequent rearrangement of the cyclopropylcarbinyl intermediate to yield phytoene. The polypeptide is Phytoene synthase (crtB) (Mycobacterium bovis (strain ATCC BAA-935 / AF2122/97)).